The chain runs to 213 residues: Type II restriction enzyme BamHI (213 aa).

Mg(2+) is bound by residues E77, D94, E111, and F112. The Proton acceptor role is filled by E113.

In terms of assembly, homodimer. The cofactor is Mg(2+).

The enzyme catalyses Endonucleolytic cleavage of DNA to give specific double-stranded fragments with terminal 5'-phosphates.. In terms of biological role, a P subtype restriction enzyme that recognizes the double-stranded sequence 5'-GGATCC-3' and cleaves after G-1. The polypeptide is Type II restriction enzyme BamHI (Bacillus amyloliquefaciens (Bacillus velezensis)).